A 430-amino-acid polypeptide reads, in one-letter code: GTPase Obg (430 aa).

An Obg domain is found at 1–158 (MFVDQVTISL…LDVTLELKLL (158 aa)). A disordered region spans residues 118–145 (RGGRGGRGNSRFATPRNPAPDFSENGEP). Residues 159 to 329 (ADVGLVGFPS…LLYAIADKLD (171 aa)) enclose the OBG-type G domain. GTP contacts are provided by residues 165–172 (GFPSVGKS), 190–194 (FTTIK), 212–215 (DLPG), 282–285 (NKMD), and 310–312 (STI). S172 and T192 together coordinate Mg(2+). An OCT domain is found at 352-430 (KHTPSQDKFT…ILGGEFEFVE (79 aa)).

Belongs to the TRAFAC class OBG-HflX-like GTPase superfamily. OBG GTPase family. As to quaternary structure, monomer. The cofactor is Mg(2+).

It is found in the cytoplasm. An essential GTPase which binds GTP, GDP and possibly (p)ppGpp with moderate affinity, with high nucleotide exchange rates and a fairly low GTP hydrolysis rate. Plays a role in control of the cell cycle, stress response, ribosome biogenesis and in those bacteria that undergo differentiation, in morphogenesis control. In Staphylococcus haemolyticus (strain JCSC1435), this protein is GTPase Obg.